We begin with the raw amino-acid sequence, 236 residues long: 2-C-methyl-D-erythritol 4-phosphate cytidylyltransferase (236 aa).

The protein belongs to the IspD/TarI cytidylyltransferase family. IspD subfamily. In terms of assembly, homodimer.

The enzyme catalyses 2-C-methyl-D-erythritol 4-phosphate + CTP + H(+) = 4-CDP-2-C-methyl-D-erythritol + diphosphate. Its pathway is isoprenoid biosynthesis; isopentenyl diphosphate biosynthesis via DXP pathway; isopentenyl diphosphate from 1-deoxy-D-xylulose 5-phosphate: step 2/6. Its function is as follows. Catalyzes the formation of 4-diphosphocytidyl-2-C-methyl-D-erythritol from CTP and 2-C-methyl-D-erythritol 4-phosphate (MEP). This Escherichia coli O45:K1 (strain S88 / ExPEC) protein is 2-C-methyl-D-erythritol 4-phosphate cytidylyltransferase.